A 162-amino-acid chain; its full sequence is NADH-quinone oxidoreductase subunit I (162 aa).

2 4Fe-4S ferredoxin-type domains span residues 54-83 and 93-122; these read RRYENGEERCIACKLCEAVCPAMAITIESE and TRYDIDLTKCIFCGFCEESCPVDSIVETQI. Positions 63, 66, 69, 73, 102, 105, 108, and 112 each coordinate [4Fe-4S] cluster.

It belongs to the complex I 23 kDa subunit family. As to quaternary structure, NDH-1 is composed of 14 different subunits. Subunits NuoA, H, J, K, L, M, N constitute the membrane sector of the complex. The cofactor is [4Fe-4S] cluster.

It is found in the cell inner membrane. It carries out the reaction a quinone + NADH + 5 H(+)(in) = a quinol + NAD(+) + 4 H(+)(out). Functionally, NDH-1 shuttles electrons from NADH, via FMN and iron-sulfur (Fe-S) centers, to quinones in the respiratory chain. The immediate electron acceptor for the enzyme in this species is believed to be ubiquinone. Couples the redox reaction to proton translocation (for every two electrons transferred, four hydrogen ions are translocated across the cytoplasmic membrane), and thus conserves the redox energy in a proton gradient. The sequence is that of NADH-quinone oxidoreductase subunit I from Burkholderia vietnamiensis (strain G4 / LMG 22486) (Burkholderia cepacia (strain R1808)).